Here is a 316-residue protein sequence, read N- to C-terminus: Pantothenate kinase (316 aa).

96 to 103 (GSVAVGKS) serves as a coordination point for ATP.

This sequence belongs to the prokaryotic pantothenate kinase family.

Its subcellular location is the cytoplasm. The catalysed reaction is (R)-pantothenate + ATP = (R)-4'-phosphopantothenate + ADP + H(+). It functions in the pathway cofactor biosynthesis; coenzyme A biosynthesis; CoA from (R)-pantothenate: step 1/5. This is Pantothenate kinase from Shouchella clausii (strain KSM-K16) (Alkalihalobacillus clausii).